Reading from the N-terminus, the 142-residue chain is Probable transport accessory protein MmpS5 (142 aa).

The chain crosses the membrane as a helical span at residues 7–26 (RAWIPLLILVVVAIAGFTVQ).

This sequence belongs to the MmpS family.

It is found in the cell membrane. The chain is Probable transport accessory protein MmpS5 (mmpS5) from Mycobacterium bovis (strain ATCC BAA-935 / AF2122/97).